A 55-amino-acid chain; its full sequence is Ferredoxin (55 aa).

2 consecutive 4Fe-4S ferredoxin-type domains span residues 2–27 (HIIT…HEGT) and 28–55 (GKYE…VKAE). Cysteine 8, cysteine 11, cysteine 14, cysteine 18, cysteine 37, cysteine 40, cysteine 43, and cysteine 47 together coordinate [4Fe-4S] cluster.

Requires [4Fe-4S] cluster as cofactor.

In terms of biological role, ferredoxins are iron-sulfur proteins that transfer electrons in a wide variety of metabolic reactions. The sequence is that of Ferredoxin from Thermoanaerobacterium thermosaccharolyticum (Clostridium thermosaccharolyticum).